Here is a 215-residue protein sequence, read N- to C-terminus: 5'-deoxynucleotidase YGK1 (215 aa).

Positions 58-164 (ISDHMYRMGL…VKDIDKYEML (107 aa)) constitute an HD domain. Positions 61, 89, 90, 93, 98, 99, and 159 each coordinate a divalent metal cation.

The protein belongs to the HDDC2 family. Homodimer. Requires Mn(2+) as cofactor. Co(2+) is required as a cofactor. Mg(2+) serves as cofactor.

It catalyses the reaction a 2'-deoxyribonucleoside 5'-phosphate + H2O = a 2'-deoxyribonucleoside + phosphate. Its function is as follows. Catalyzes the dephosphorylation of the nucleoside 5'-monophosphates deoxyadenosine monophosphate (dAMP), deoxycytidine monophosphate (dCMP), deoxyguanosine monophosphate (dGMP) and deoxythymidine monophosphate (dTMP). In Saccharomyces cerevisiae (strain ATCC 204508 / S288c) (Baker's yeast), this protein is 5'-deoxynucleotidase YGK1.